We begin with the raw amino-acid sequence, 376 residues long: 26S proteasome non-ATPase regulatory subunit 4 (376 aa).

The VWFA domain occupies 5 to 188 (STMVCVDNSE…LADALISSPI (184 aa)). Residue lysine 122 forms a Glycyl lysine isopeptide (Lys-Gly) (interchain with G-Cter in SUMO2) linkage. The segment at 197-262 (LGLGASDFEF…TEDSDDALLK (66 aa)) is interaction with UBQLN1. Residues 211–230 (SADPELALALRVSMEEQRQR) form the UIM 1 domain. The segment covering 224-237 (MEEQRQRQEEEARR) has biased composition (basic and acidic residues). Residues 224-257 (MEEQRQRQEEEARRAAAASAAEAGIATPGTEDSD) form a disordered region. Phosphothreonine is present on residues threonine 250 and threonine 253. Residues serine 256 and alanine 259 each carry the phosphoserine modification. Residues 282 to 301 (TEEEQIAYAMQMSLQGTEFS) form the UIM 2 domain. The disordered stretch occupies residues 355-376 (MGALASQATKDGKNDKKEEEKK). A Phosphoserine modification is found at serine 360. The span at 364–376 (KDGKNDKKEEEKK) shows a compositional bias: basic and acidic residues.

It belongs to the proteasome subunit S5A family. In terms of assembly, component of the 19S proteasome regulatory particle complex. The 26S proteasome consists of a 20S core particle (CP) and two 19S regulatory subunits (RP). The regulatory particle is made of a lid composed of 9 subunits, a base containing 6 ATPases and few additional components including PSMD4. Interacts with NUB1. Interacts with SQSTM1. Interacts with UBQLN4. Interacts with UBE3A. Interacts with UBQLN1 (via ubiquitin-like domain). Interacts with DDI2. In terms of tissue distribution, isoform Rpn10A is ubiquitous whereas isoform Rpn10E is mostly expressed in the embryonic brain.

In terms of biological role, component of the 26S proteasome, a multiprotein complex involved in the ATP-dependent degradation of ubiquitinated proteins. This complex plays a key role in the maintenance of protein homeostasis by removing misfolded or damaged proteins, which could impair cellular functions, and by removing proteins whose functions are no longer required. Therefore, the proteasome participates in numerous cellular processes, including cell cycle progression, apoptosis, or DNA damage repair. PSMD4 acts as an ubiquitin receptor subunit through ubiquitin-interacting motifs and selects ubiquitin-conjugates for destruction. Displays a preferred selectivity for longer polyubiquitin chains. The polypeptide is 26S proteasome non-ATPase regulatory subunit 4 (Psmd4) (Mus musculus (Mouse)).